A 325-amino-acid polypeptide reads, in one-letter code: tRNA dimethylallyltransferase (325 aa).

21-28 serves as a coordination point for ATP; that stretch reads GPTASGKS. 23-28 lines the substrate pocket; the sequence is TASGKS. Positions 166 to 170 are interaction with substrate tRNA; sequence QRLAR.

The protein belongs to the IPP transferase family. In terms of assembly, monomer. The cofactor is Mg(2+).

It carries out the reaction adenosine(37) in tRNA + dimethylallyl diphosphate = N(6)-dimethylallyladenosine(37) in tRNA + diphosphate. In terms of biological role, catalyzes the transfer of a dimethylallyl group onto the adenine at position 37 in tRNAs that read codons beginning with uridine, leading to the formation of N6-(dimethylallyl)adenosine (i(6)A). The protein is tRNA dimethylallyltransferase of Acidiphilium cryptum (strain JF-5).